Consider the following 299-residue polypeptide: Pyridoxal 5'-phosphate synthase subunit PdxS (299 aa).

Asp29 contacts D-ribose 5-phosphate. Lys86 functions as the Schiff-base intermediate with D-ribose 5-phosphate in the catalytic mechanism. Residue Gly158 participates in D-ribose 5-phosphate binding. Arg170 is a D-glyceraldehyde 3-phosphate binding site. Residues Gly219 and 240–241 (GS) contribute to the D-ribose 5-phosphate site.

The protein belongs to the PdxS/SNZ family. In terms of assembly, in the presence of PdxT, forms a dodecamer of heterodimers.

The enzyme catalyses aldehydo-D-ribose 5-phosphate + D-glyceraldehyde 3-phosphate + L-glutamine = pyridoxal 5'-phosphate + L-glutamate + phosphate + 3 H2O + H(+). The protein operates within cofactor biosynthesis; pyridoxal 5'-phosphate biosynthesis. Functionally, catalyzes the formation of pyridoxal 5'-phosphate from ribose 5-phosphate (RBP), glyceraldehyde 3-phosphate (G3P) and ammonia. The ammonia is provided by the PdxT subunit. Can also use ribulose 5-phosphate and dihydroxyacetone phosphate as substrates, resulting from enzyme-catalyzed isomerization of RBP and G3P, respectively. The polypeptide is Pyridoxal 5'-phosphate synthase subunit PdxS (Protochlamydia amoebophila (strain UWE25)).